The following is a 169-amino-acid chain: Deoxyuridine 5'-triphosphate nucleotidohydrolase (169 aa).

Positions 1–10 are enriched in polar residues; that stretch reads MAENQINSPE. The interval 1–25 is disordered; the sequence is MAENQINSPEITEPSPKVQKLDHPE. Substrate-binding positions include 91-93, 105-108, G116, R159, and 164-165; these read RSG, GVID, and FG.

Belongs to the dUTPase family. Homodimer. The cofactor is Mg(2+). As to expression, vegetative and floral merismatic cells and provascular and vascular merismatic derivatives.

The enzyme catalyses dUTP + H2O = dUMP + diphosphate + H(+). Its pathway is pyrimidine metabolism; dUMP biosynthesis; dUMP from dCTP (dUTP route): step 2/2. Its function is as follows. This enzyme is involved in nucleotide metabolism: it produces dUMP, the immediate precursor of thymidine nucleotides and it decreases the intracellular concentration of dUTP so that uracil cannot be incorporated into DNA. It may have as well a metabolic role in merismatic cells. In Solanum lycopersicum (Tomato), this protein is Deoxyuridine 5'-triphosphate nucleotidohydrolase.